The chain runs to 289 residues: Growth hormone-regulated TBC protein 1 (289 aa).

Residues 41 to 211 (LVILTKRAIK…RIWDCLFNEG (171 aa)) form the Rab-GAP TBC domain.

May act as a GTPase-activating protein for Rab family protein(s). This chain is Growth hormone-regulated TBC protein 1 (Grtp1), found in Rattus norvegicus (Rat).